A 361-amino-acid chain; its full sequence is Peptide chain release factor 1 (361 aa).

Gln-237 bears the N5-methylglutamine mark. Residues 286-306 form a disordered region; that stretch reads AKQDQEQAAKRKSLVGSGDRS.

This sequence belongs to the prokaryotic/mitochondrial release factor family. In terms of processing, methylated by PrmC. Methylation increases the termination efficiency of RF1.

The protein localises to the cytoplasm. Its function is as follows. Peptide chain release factor 1 directs the termination of translation in response to the peptide chain termination codons UAG and UAA. This Coxiella burnetii (strain CbuK_Q154) (Coxiella burnetii (strain Q154)) protein is Peptide chain release factor 1.